Here is a 318-residue protein sequence, read N- to C-terminus: tRNA dimethylallyltransferase (318 aa).

ATP is bound at residue 9–16 (GATASGKT). 11–16 (TASGKT) contacts substrate. Interaction with substrate tRNA regions lie at residues 34–37 (DSAQ) and 158–162 (QRIIR).

The protein belongs to the IPP transferase family. As to quaternary structure, monomer. It depends on Mg(2+) as a cofactor.

It catalyses the reaction adenosine(37) in tRNA + dimethylallyl diphosphate = N(6)-dimethylallyladenosine(37) in tRNA + diphosphate. Catalyzes the transfer of a dimethylallyl group onto the adenine at position 37 in tRNAs that read codons beginning with uridine, leading to the formation of N6-(dimethylallyl)adenosine (i(6)A). The protein is tRNA dimethylallyltransferase of Dichelobacter nodosus (strain VCS1703A).